We begin with the raw amino-acid sequence, 466 residues long: Argininosuccinate lyase (466 aa).

This sequence belongs to the lyase 1 family. Argininosuccinate lyase subfamily.

Its subcellular location is the cytoplasm. The enzyme catalyses 2-(N(omega)-L-arginino)succinate = fumarate + L-arginine. It functions in the pathway amino-acid biosynthesis; L-arginine biosynthesis; L-arginine from L-ornithine and carbamoyl phosphate: step 3/3. This Brucella anthropi (strain ATCC 49188 / DSM 6882 / CCUG 24695 / JCM 21032 / LMG 3331 / NBRC 15819 / NCTC 12168 / Alc 37) (Ochrobactrum anthropi) protein is Argininosuccinate lyase.